Here is a 492-residue protein sequence, read N- to C-terminus: MNILRRIPANLIASRYYYTNRVKKTTLYSKISPLGDPKSSVYPELQNWVQCGKKVSVAELIRIVHDLRRRKRFLHALEVSKWMNETGVCVFSPTEHAVHLDLIGRVYGFVTAEEYFENLKEQYKNDKTYGALLNCYVRQQNVEKSLLHFEKMKEMGFVTSSLTYNNIMCLYTNIGQHEKVPKVLEEMKEENVAPDNYSYRICINAFGAMYDLERIGGTLRDMERRQDITMDWNTYAVAAKFYIDGGDCDRAVELLKMSENRLEKKDGEGYNHLITLYARLGKKIEVLRLWDLEKDVCKRRINQDYLTVLQSLVKIDALVEAEEVLTEWKSSGNCYDFRVPNTVIRGYIGKSMEEKAEAMLEDLARRGKATTPESWELVATAYAEKGTLENAFKCMKTALGVEVGSRKWRPGLTLVTSVLSWVGDEGSLKEVESFVASLRNCIGVNKQMYHALVKADIREGGRNIDTLLQRMKDDKIEIDEETTVILSTRSPC.

Residues 1 to 17 constitute a mitochondrion transit peptide; the sequence is MNILRRIPANLIASRYY. 8 PPR repeats span residues 125-159, 160-194, 195-225, 231-261, 266-296, 301-335, 336-370, and 371-405; these read NDKTYGALLNCYVRQQNVEKSLLHFEKMKEMGFVT, SSLTYNNIMCLYTNIGQHEKVPKVLEEMKEENVAP, DNYSYRICINAFGAMYDLERIGGTLRDMERR, DWNTYAVAAKFYIDGGDCDRAVELLKMSENR, DGEGYNHLITLYARLGKKIEVLRLWDLEKDV, INQDYLTVLQSLVKIDALVEAEEVLTEWKSSGNCY, DFRVPNTVIRGYIGKSMEEKAEAMLEDLARRGKAT, and TPESWELVATAYAEKGTLENAFKCMKTALGVEVGS.

Belongs to the PPR family. P subfamily.

The protein resides in the mitochondrion. The polypeptide is Pentatricopeptide repeat-containing protein At4g21705, mitochondrial (Arabidopsis thaliana (Mouse-ear cress)).